A 337-amino-acid chain; its full sequence is Cytoskeleton protein RodZ (337 aa).

Residues 1–111 (MNTEATHDQN…LGKRRKKRDG (111 aa)) lie on the Cytoplasmic side of the membrane. Residues 19 to 71 (LRNAREQLGLSQQAVAERLCLKVSTVRDIEEDKAPADLASTFLRGYIRSYARL) form the HTH cro/C1-type domain. A DNA-binding region (H-T-H motif) is located at residues 30 to 49 (QQAVAERLCLKVSTVRDIEE). Residues 112-132 (WLMTFTWLVLFVVIGLSGAWW) form a helical; Signal-anchor for type II membrane protein membrane-spanning segment. Over 133 to 337 (WQDHKAQQEE…TLNAEQSPAQ (205 aa)) the chain is Periplasmic. Over residues 145-167 (TMADQSSAELSSNSEQGQSVPLN) the composition is skewed to polar residues. Residues 145-236 (TMADQSSAEL…TAATTPDGAA (92 aa)) are disordered. Over residues 168-207 (TSTTTDPATTSTPPASVDTTATNTQTPVVTAPAPAVDPQQ) the composition is skewed to low complexity. Over residues 208 to 218 (NAVVSPSQANV) the composition is skewed to polar residues. A compositionally biased stretch (low complexity) spans 219-236 (DTAATPAPTAATTPDGAA).

The protein belongs to the RodZ family.

It is found in the cell inner membrane. Cytoskeletal protein that is involved in cell-shape control through regulation of the length of the long axis. In Escherichia coli O157:H7, this protein is Cytoskeleton protein RodZ.